Reading from the N-terminus, the 201-residue chain is Holliday junction resolvase RecU (201 aa).

4 residues coordinate Mg(2+): Thr87, Asp89, Glu102, and Gln121.

Belongs to the RecU family. Mg(2+) is required as a cofactor.

The protein localises to the cytoplasm. It carries out the reaction Endonucleolytic cleavage at a junction such as a reciprocal single-stranded crossover between two homologous DNA duplexes (Holliday junction).. Endonuclease that resolves Holliday junction intermediates in genetic recombination. Cleaves mobile four-strand junctions by introducing symmetrical nicks in paired strands. Promotes annealing of linear ssDNA with homologous dsDNA. Required for DNA repair, homologous recombination and chromosome segregation. The chain is Holliday junction resolvase RecU from Listeria welshimeri serovar 6b (strain ATCC 35897 / DSM 20650 / CCUG 15529 / CIP 8149 / NCTC 11857 / SLCC 5334 / V8).